The chain runs to 705 residues: GATOR2 complex protein WDR24 (705 aa).

6 WD repeats span residues 1 to 28 (MDENLLATAATNGVVVTWNLGKPSRNKQ), 34 to 74 (EHKR…SVST), 77 to 117 (GQSE…RYER), 121 to 161 (AHNG…AKEI), 165 to 207 (QTIA…IPSA), and 211 to 254 (EHKD…IDRA). The C4-type zinc finger occupies 633–655 (NCSNCKRPMSNRGWICDRCRQCA). Zn(2+) contacts are provided by C634, C637, C648, C651, C658, C661, C672, C675, H677, H680, H683, C694, C698, H700, and C702. An RING-type; atypical zinc finger spans residues 656 to 705 (SMCAVCHHVVKGLFVWCQGCSHGGHLQHIMKWLETSSHCPAGCGHLCEYT).

The protein belongs to the WD repeat WDR24 family. In terms of assembly, component of the GATOR2 subcomplex, composed of MIOS, SEC13, SEH1L, WDR24 and WDR59. The GATOR2 complex interacts with CASTOR1 and CASTOR2; the interaction is negatively regulated by arginine. The GATOR2 complex interacts with SESN1, SESN2 and SESN3; the interaction is negatively regulated by amino acids.

It is found in the lysosome membrane. The enzyme catalyses S-ubiquitinyl-[E2 ubiquitin-conjugating enzyme]-L-cysteine + [acceptor protein]-L-lysine = [E2 ubiquitin-conjugating enzyme]-L-cysteine + N(6)-ubiquitinyl-[acceptor protein]-L-lysine.. It participates in protein modification; protein ubiquitination. Its activity is regulated as follows. The GATOR2 complex is negatively regulated by the upstream amino acid sensors CASTOR1 and SESN2, which sequester the GATOR2 complex in absence of amino acids. In the presence of abundant amino acids, GATOR2 is released from CASTOR1 and SESN2 and activated. Catalytic component of the GATOR2 complex, a multiprotein complex that acts as an activator of the amino acid-sensing branch of the mTORC1 signaling pathway. The GATOR2 complex indirectly activates mTORC1 through the inhibition of the GATOR1 subcomplex. GATOR2 probably acts as an E3 ubiquitin-protein ligase toward GATOR1. In the presence of abundant amino acids, the GATOR2 complex mediates ubiquitination of the NPRL2 core component of the GATOR1 complex, leading to GATOR1 inactivation. In the absence of amino acids, GATOR2 is inhibited, activating the GATOR1 complex. In addition to its role in regulation of the mTORC1 complex, promotes the acidification of lysosomes and facilitates autophagic flux. Within the GATOR2 complex, WDR24 constitutes the catalytic subunit that mediates 'Lys-6'-linked ubiquitination of NPRL2. This chain is GATOR2 complex protein WDR24, found in Gallus gallus (Chicken).